The chain runs to 245 residues: UPF0328 protein ECU09_2010 (245 aa).

It belongs to the UPF0328 family.

In Encephalitozoon cuniculi (strain GB-M1) (Microsporidian parasite), this protein is UPF0328 protein ECU09_2010.